A 430-amino-acid polypeptide reads, in one-letter code: Adenylosuccinate synthetase (430 aa).

Residues 13–19 (GDEGKGK) and 41–43 (GHT) each bind GTP. The Proton acceptor role is filled by aspartate 14. Mg(2+) contacts are provided by aspartate 14 and glycine 41. Residues 14–17 (DEGK), 39–42 (NAGH), threonine 130, arginine 144, glutamine 225, threonine 240, and arginine 304 each bind IMP. Histidine 42 acts as the Proton donor in catalysis. 300–306 (STTGRKR) is a binding site for substrate. Residues arginine 306, 332 to 334 (KLD), and 414 to 416 (STG) contribute to the GTP site.

Belongs to the adenylosuccinate synthetase family. As to quaternary structure, homodimer. Requires Mg(2+) as cofactor.

It localises to the cytoplasm. The catalysed reaction is IMP + L-aspartate + GTP = N(6)-(1,2-dicarboxyethyl)-AMP + GDP + phosphate + 2 H(+). It functions in the pathway purine metabolism; AMP biosynthesis via de novo pathway; AMP from IMP: step 1/2. In terms of biological role, plays an important role in the de novo pathway of purine nucleotide biosynthesis. Catalyzes the first committed step in the biosynthesis of AMP from IMP. The protein is Adenylosuccinate synthetase of Buchnera aphidicola subsp. Schizaphis graminum (strain Sg).